Here is a 146-residue protein sequence, read N- to C-terminus: Large-conductance mechanosensitive channel (146 aa).

Helical transmembrane passes span Val-21 to Ile-41, Val-44 to Gly-64, and Gly-83 to Val-103.

Belongs to the MscL family. In terms of assembly, homopentamer.

Its subcellular location is the cell inner membrane. In terms of biological role, channel that opens in response to stretch forces in the membrane lipid bilayer. May participate in the regulation of osmotic pressure changes within the cell. This Cereibacter sphaeroides (strain ATCC 17025 / ATH 2.4.3) (Rhodobacter sphaeroides) protein is Large-conductance mechanosensitive channel.